Reading from the N-terminus, the 142-residue chain is Large ribosomal subunit protein uL13 (142 aa).

The protein belongs to the universal ribosomal protein uL13 family. As to quaternary structure, part of the 50S ribosomal subunit.

Its function is as follows. This protein is one of the early assembly proteins of the 50S ribosomal subunit, although it is not seen to bind rRNA by itself. It is important during the early stages of 50S assembly. The chain is Large ribosomal subunit protein uL13 from Aeromonas hydrophila subsp. hydrophila (strain ATCC 7966 / DSM 30187 / BCRC 13018 / CCUG 14551 / JCM 1027 / KCTC 2358 / NCIMB 9240 / NCTC 8049).